Consider the following 83-residue polypeptide: Cytochrome b559 subunit alpha (83 aa).

Residues 22-36 (VIHAVTLPAIFLAGF) traverse the membrane as a helical segment. A heme-binding site is contributed by H24.

Belongs to the PsbE/PsbF family. As to quaternary structure, heterodimer of an alpha subunit and a beta subunit. PSII is composed of 1 copy each of membrane proteins PsbA, PsbB, PsbC, PsbD, PsbE, PsbF, PsbH, PsbI, PsbJ, PsbK, PsbL, PsbM, PsbT, PsbX, PsbY, PsbZ, Psb30/Ycf12, peripheral proteins PsbO, CyanoQ (PsbQ), PsbU, PsbV and a large number of cofactors. It forms dimeric complexes. Heme b serves as cofactor.

Its subcellular location is the cellular thylakoid membrane. This b-type cytochrome is tightly associated with the reaction center of photosystem II (PSII). PSII is a light-driven water:plastoquinone oxidoreductase that uses light energy to abstract electrons from H(2)O, generating O(2) and a proton gradient subsequently used for ATP formation. It consists of a core antenna complex that captures photons, and an electron transfer chain that converts photonic excitation into a charge separation. The sequence is that of Cytochrome b559 subunit alpha from Synechococcus sp. (strain RCC307).